The sequence spans 311 residues: DNA-directed RNA polymerase subunit alpha (311 aa).

The segment at 1–227 is alpha N-terminal domain (alpha-NTD); sequence MAQFQIECIE…NLFCSLRNLD (227 aa). The segment at 239-311 is alpha C-terminal domain (alpha-CTD); the sequence is DKKISQVLIE…GISLPKEKSD (73 aa).

It belongs to the RNA polymerase alpha chain family. In terms of assembly, in plastids the minimal PEP RNA polymerase catalytic core is composed of four subunits: alpha, beta, beta', and beta''. When a (nuclear-encoded) sigma factor is associated with the core the holoenzyme is formed, which can initiate transcription.

It localises to the plastid. Its subcellular location is the chloroplast. The enzyme catalyses RNA(n) + a ribonucleoside 5'-triphosphate = RNA(n+1) + diphosphate. In terms of biological role, DNA-dependent RNA polymerase catalyzes the transcription of DNA into RNA using the four ribonucleoside triphosphates as substrates. This is DNA-directed RNA polymerase subunit alpha from Pyropia yezoensis (Susabi-nori).